The chain runs to 20 residues: Brevinin-1LT (20 aa).

The cysteines at positions 14 and 20 are disulfide-linked.

Expressed by the skin glands.

It is found in the secreted. In terms of biological role, antimicrobial peptide. In Rana latastei (Italian agile frog), this protein is Brevinin-1LT.